The primary structure comprises 340 residues: HTH-type transcriptional regulator VirS (340 aa).

The region spanning E236–Y334 is the HTH araC/xylS-type domain. 2 DNA-binding regions (H-T-H motif) span residues E254–G275 and L301–F324.

Post-translationally, phosphorylated by PknK. Phosphorylation increases affinity for the mymA promoter.

Regulates the expression of the mymA operon. This Mycobacterium tuberculosis (strain CDC 1551 / Oshkosh) protein is HTH-type transcriptional regulator VirS (virS).